The following is a 470-amino-acid chain: Putative ankyrin repeat protein L279 (470 aa).

ANK repeat units follow at residues 119-148 (RDDY…NPGT), 149-178 (NKYA…GSDK), 372-401 (ETQG…NVNE), and 403-431 (NGKP…DISL).

This is Putative ankyrin repeat protein L279 from Acanthamoeba polyphaga (Amoeba).